We begin with the raw amino-acid sequence, 348 residues long: uncharacterized protein (348 aa).

Belongs to the Mu gp47/PBSX XkdT family.

This is an uncharacterized protein from Bacillus subtilis (strain 168).